The sequence spans 200 residues: Holliday junction branch migration complex subunit RuvA (200 aa).

The tract at residues 1 to 64 (MITSIQGTLV…EDSQTLYGFA (64 aa)) is domain I. The interval 65 to 144 (SPAERDFFRL…ATGAAPGLAT (80 aa)) is domain II. The interval 145-151 (QPAAAAS) is flexible linker. The domain III stretch occupies residues 152–200 (PGASAHRDAVAALVALGYRSADADEAVRRASLALGEAATTESLIKKALS).

Belongs to the RuvA family. Homotetramer. Forms an RuvA(8)-RuvB(12)-Holliday junction (HJ) complex. HJ DNA is sandwiched between 2 RuvA tetramers; dsDNA enters through RuvA and exits via RuvB. An RuvB hexamer assembles on each DNA strand where it exits the tetramer. Each RuvB hexamer is contacted by two RuvA subunits (via domain III) on 2 adjacent RuvB subunits; this complex drives branch migration. In the full resolvosome a probable DNA-RuvA(4)-RuvB(12)-RuvC(2) complex forms which resolves the HJ.

The protein localises to the cytoplasm. Its function is as follows. The RuvA-RuvB-RuvC complex processes Holliday junction (HJ) DNA during genetic recombination and DNA repair, while the RuvA-RuvB complex plays an important role in the rescue of blocked DNA replication forks via replication fork reversal (RFR). RuvA specifically binds to HJ cruciform DNA, conferring on it an open structure. The RuvB hexamer acts as an ATP-dependent pump, pulling dsDNA into and through the RuvAB complex. HJ branch migration allows RuvC to scan DNA until it finds its consensus sequence, where it cleaves and resolves the cruciform DNA. This Opitutus terrae (strain DSM 11246 / JCM 15787 / PB90-1) protein is Holliday junction branch migration complex subunit RuvA.